Consider the following 65-residue polypeptide: Antimicrobial peptide 1 (65 aa).

An N-terminal signal peptide occupies residues 1–27 (MAKVSSAYLKFALVMILLLSVISAVMS). Intrachain disulfides connect C30–C47, C37–C51, and C46–C62.

It belongs to the AMP family. As to expression, seed specific.

It is found in the secreted. In terms of biological role, possesses antifungal activity. The protein is Antimicrobial peptide 1 of Phytolacca americana (American pokeweed).